Consider the following 576-residue polypeptide: Potassium-transporting ATPase potassium-binding subunit (576 aa).

Transmembrane regions (helical) follow at residues 3 to 23 (IFLD…ISPI), 68 to 88 (LYAL…TLLF), 137 to 157 (GLAL…LVLI), 179 to 199 (ILYV…SQGV), 267 to 287 (FEAF…GYMI), 294 to 314 (WFLY…QYYF), 339 to 359 (FGIG…CGAV), 369 to 389 (LGGL…GGVG), 391 to 411 (GLYG…LMIG), 430 to 450 (VVIT…ALYT), 495 to 515 (ITTG…VFYM), and 537 to 557 (LVFG…TFLP).

The protein belongs to the KdpA family. As to quaternary structure, the system is composed of three essential subunits: KdpA, KdpB and KdpC.

The protein localises to the cell inner membrane. In terms of biological role, part of the high-affinity ATP-driven potassium transport (or Kdp) system, which catalyzes the hydrolysis of ATP coupled with the electrogenic transport of potassium into the cytoplasm. This subunit binds the periplasmic potassium ions and delivers the ions to the membrane domain of KdpB through an intramembrane tunnel. The chain is Potassium-transporting ATPase potassium-binding subunit from Hydrogenobaculum sp. (strain Y04AAS1).